A 680-amino-acid polypeptide reads, in one-letter code: MIDRYKHQQLRIGSVSPQQIINWGKKILPNGEIVGEVTKPYTFHYKTNKPEKDGLFCERISGPIKSGICACGNYRVIGDKKEDPKFCEQCGVEFVDSRIRRYQMGYIKLACPVTHVWYLKRLPSYIANLLDKPLKELEGLVYCDFSFARPIAKKPTFLRLRGSFEYEIQSRKYSIPLFFTTQGFDTFRNREIATGAGAIREQLADLDLRIIIDHSLVEWKELGEEGSTGNEWEDRKIRRRKDFLVRRMELAKHFIRTNIEPERMVLCLLPVLPPELRPIIQIDGGKPMSSDINELYRRVIYRNNTLTDLLTTSRSTPGESVMCQEKLVQEAVDTLLDNGIRGQPMRDGHNKVYKSFSDVIEGKEGRFRETLLGKRVDYSGRSVIVVGPSLSLHRCGLPREIAIELFQTFVIRGLIRQQIASNIGIAKSKIREKEPIVWEILQEVMQGHPVLLNRAPTLHRLGIQAFQPILVEGRAICLHPLVRKGFNADFDGDQMAVHVPLSLEAQAEARLLMFSHMNLLSPAMGDPISVPTQDMLIGLYVLTIGNRRGICANRYNSCNRGKYQNETKNNSKYTKAKEPYFSSAYDALGAYRQKRINLDNPLWLRWRLDQRAIASREVPIEVQYESLGTYHEIYGQYLIVRSVKKEILCIYIRTTVGHISFYREIEEAIQGFCRAYSYGT.

Zn(2+)-binding residues include C69, C71, C87, and C90. Mg(2+) is bound by residues D489, D491, and D493.

This sequence belongs to the RNA polymerase beta' chain family. RpoC1 subfamily. In plastids the minimal PEP RNA polymerase catalytic core is composed of four subunits: alpha, beta, beta', and beta''. When a (nuclear-encoded) sigma factor is associated with the core the holoenzyme is formed, which can initiate transcription. The cofactor is Mg(2+). Zn(2+) is required as a cofactor.

It is found in the plastid. Its subcellular location is the chloroplast. It catalyses the reaction RNA(n) + a ribonucleoside 5'-triphosphate = RNA(n+1) + diphosphate. Functionally, DNA-dependent RNA polymerase catalyzes the transcription of DNA into RNA using the four ribonucleoside triphosphates as substrates. This Ceratophyllum demersum (Rigid hornwort) protein is DNA-directed RNA polymerase subunit beta'.